Here is a 340-residue protein sequence, read N- to C-terminus: DNA polymerase III subunit delta' (340 aa).

The DNA polymerase holoenzyme is a complex that contains 10 different types of subunits. These subunits are organized into 3 functionally essential subassemblies: the pol III core, the beta sliding clamp processivity factor and the clamp-loading complex. The pol III core (subunits alpha,epsilon and theta) contains the polymerase and the 3'-5' exonuclease proofreading activities. The polymerase is tethered to the template via the sliding clamp processivity factor. The clamp-loading complex assembles the beta processivity factor onto the primer template and plays a central role in the organization and communication at the replication fork. This complex contains delta, delta', psi and chi, and copies of either or both of two different DnaX proteins, gamma and tau. The composition of the holoenzyme is, therefore: (alpha,epsilon,theta)[2]-(gamma/tau)[3]-delta,delta', psi,chi-beta[4].

The catalysed reaction is DNA(n) + a 2'-deoxyribonucleoside 5'-triphosphate = DNA(n+1) + diphosphate. In terms of biological role, DNA polymerase III is a complex, multichain enzyme responsible for most of the replicative synthesis in bacteria. This DNA polymerase also exhibits 3' to 5' exonuclease activity. This Yersinia pestis protein is DNA polymerase III subunit delta' (holB).